The chain runs to 29 residues: Protein YldA (29 aa).

Residues Phe5–Leu25 traverse the membrane as a helical segment.

The protein localises to the cell inner membrane. This chain is Protein YldA, found in Escherichia coli (strain K12).